A 93-amino-acid chain; its full sequence is YcgL domain-containing protein Spea_2443 (93 aa).

The YcgL domain occupies M1 to K85.

This chain is YcgL domain-containing protein Spea_2443, found in Shewanella pealeana (strain ATCC 700345 / ANG-SQ1).